The chain runs to 503 residues: Aspartyl/glutamyl-tRNA(Asn/Gln) amidotransferase subunit B (503 aa).

It belongs to the GatB/GatE family. GatB subfamily. Heterotrimer of A, B and C subunits.

The enzyme catalyses L-glutamyl-tRNA(Gln) + L-glutamine + ATP + H2O = L-glutaminyl-tRNA(Gln) + L-glutamate + ADP + phosphate + H(+). The catalysed reaction is L-aspartyl-tRNA(Asn) + L-glutamine + ATP + H2O = L-asparaginyl-tRNA(Asn) + L-glutamate + ADP + phosphate + 2 H(+). Its function is as follows. Allows the formation of correctly charged Asn-tRNA(Asn) or Gln-tRNA(Gln) through the transamidation of misacylated Asp-tRNA(Asn) or Glu-tRNA(Gln) in organisms which lack either or both of asparaginyl-tRNA or glutaminyl-tRNA synthetases. The reaction takes place in the presence of glutamine and ATP through an activated phospho-Asp-tRNA(Asn) or phospho-Glu-tRNA(Gln). This Rhodococcus jostii (strain RHA1) protein is Aspartyl/glutamyl-tRNA(Asn/Gln) amidotransferase subunit B.